The following is a 396-amino-acid chain: ATP phosphoribosyltransferase regulatory subunit (396 aa).

Belongs to the class-II aminoacyl-tRNA synthetase family. HisZ subfamily. As to quaternary structure, heteromultimer composed of HisG and HisZ subunits.

The protein resides in the cytoplasm. The protein operates within amino-acid biosynthesis; L-histidine biosynthesis; L-histidine from 5-phospho-alpha-D-ribose 1-diphosphate: step 1/9. Required for the first step of histidine biosynthesis. May allow the feedback regulation of ATP phosphoribosyltransferase activity by histidine. The sequence is that of ATP phosphoribosyltransferase regulatory subunit from Alkaliphilus metalliredigens (strain QYMF).